The chain runs to 593 residues: Serine/threonine-protein kinase PAK 4 (593 aa).

The CRIB domain maps to 11–24 (ISAPSNFEHRVHTG). Residues 25 to 322 (FDQHEQKFTG…VVDPGDPRSY (298 aa)) form a linker region. S41 bears the Phosphoserine mark. K78 carries the post-translational modification N6-methyllysine. Residues 95–303 (TRSNSLRRES…PQREPQRVSH (209 aa)) form a disordered region. S104 carries the phosphoserine modification. Residues 118–133 (LEERAAPARMAPDKAG) show a composition bias toward basic and acidic residues. Position 148 is a phosphoserine (S148). Residues 149-164 (GDRRRVGPEKRPKSSR) are compositionally biased toward basic and acidic residues. The residue at position 181 (S181) is a Phosphoserine. The span at 184–197 (DVSTPQPGSLTSGT) shows a compositional bias: polar residues. T187 is modified (phosphothreonine). The residue at position 195 (S195) is a Phosphoserine. Phosphothreonine is present on T207. The segment covering 238–258 (AAPQSSSSSRPPTRARGAPSP) has biased composition (low complexity). Phosphoserine is present on residues S257 and S266. The segment covering 267-280 (EPQLAPPARALAAP) has biased composition (low complexity). Residues 281 to 292 (AVPPAPGPPGPR) are compositionally biased toward pro residues. The residue at position 293 (S293) is a Phosphoserine. A compositionally biased stretch (basic and acidic residues) spans 294–303 (PQREPQRVSH). Positions 323-574 (LDNFIKIGEG…AAELLKHPFL (252 aa)) constitute a Protein kinase domain. ATP-binding positions include 329 to 337 (IGEGSTGIV) and K352. The active-site Proton acceptor is D442. Position 476 is a phosphoserine; by autocatalysis (S476).

The protein belongs to the protein kinase superfamily. STE Ser/Thr protein kinase family. STE20 subfamily. Interacts tightly with GTP-bound but not GDP-bound CDC42/p21 and weakly with RAC1. Interacts with FGFR2 and GRB2. Interacts with INKA1. Interacts with SH3RF2. Interacts with RHOU and PAXI; the PAK4-RHOU complex protects RHOU from ubiquitination and acts as a scaffold to suppport paxillin/PAXI phosphorylation. Autophosphorylated on serine residues when activated by CDC42/p21. Phosphorylated on tyrosine residues upon stimulation of FGFR2. Methylated by SETD6. In terms of processing, polyubiquitinated, leading to its proteasomal degradation.

Its subcellular location is the cytoplasm. It carries out the reaction L-seryl-[protein] + ATP = O-phospho-L-seryl-[protein] + ADP + H(+). It catalyses the reaction L-threonyl-[protein] + ATP = O-phospho-L-threonyl-[protein] + ADP + H(+). With respect to regulation, inhibited by INKA1; which inhibits the serine/threonine-protein kinase activity by binding PAK4 in a substrate-like manner. Serine/threonine protein kinase that plays a role in a variety of different signaling pathways including cytoskeleton regulation, cell migration, growth, proliferation or cell survival. Activation by various effectors including growth factor receptors or active CDC42 and RAC1 results in a conformational change and a subsequent autophosphorylation on several serine and/or threonine residues. Phosphorylates and inactivates the protein phosphatase SSH1, leading to increased inhibitory phosphorylation of the actin binding/depolymerizing factor cofilin. Decreased cofilin activity may lead to stabilization of actin filaments. Phosphorylates LIMK1, a kinase that also inhibits the activity of cofilin. Phosphorylates integrin beta5/ITGB5 and thus regulates cell motility. Phosphorylates ARHGEF2 and activates the downstream target RHOA that plays a role in the regulation of assembly of focal adhesions and actin stress fibers. Stimulates cell survival by phosphorylating the BCL2 antagonist of cell death BAD. Alternatively, inhibits apoptosis by preventing caspase-8 binding to death domain receptors in a kinase independent manner. Plays a role in cell-cycle progression by controlling levels of the cell-cycle regulatory protein CDKN1A and by phosphorylating RAN. Promotes kinase-independent stabilization of RHOU, thereby contributing to focal adhesion disassembly during cell migration. This chain is Serine/threonine-protein kinase PAK 4, found in Mus musculus (Mouse).